Reading from the N-terminus, the 611-residue chain is Chaperone protein DnaK (611 aa).

Residue Thr-173 is modified to Phosphothreonine; by autocatalysis. Low complexity predominate over residues 579–592 (AAGQAEGAQGAQDA). Residues 579–598 (AAGQAEGAQGAQDAGAKKDN) are disordered.

The protein belongs to the heat shock protein 70 family.

Acts as a chaperone. In Bacillus cereus (strain ATCC 10987 / NRS 248), this protein is Chaperone protein DnaK.